A 191-amino-acid chain; its full sequence is Fe/S biogenesis protein NfuA (191 aa).

The [4Fe-4S] cluster site is built by cysteine 149 and cysteine 152.

It belongs to the NfuA family. Homodimer. It depends on [4Fe-4S] cluster as a cofactor.

Functionally, involved in iron-sulfur cluster biogenesis. Binds a 4Fe-4S cluster, can transfer this cluster to apoproteins, and thereby intervenes in the maturation of Fe/S proteins. Could also act as a scaffold/chaperone for damaged Fe/S proteins. The protein is Fe/S biogenesis protein NfuA of Erwinia tasmaniensis (strain DSM 17950 / CFBP 7177 / CIP 109463 / NCPPB 4357 / Et1/99).